Here is a 1053-residue protein sequence, read N- to C-terminus: Carbamoyl phosphate synthase large chain (1053 aa).

The carboxyphosphate synthetic domain stretch occupies residues 1–397; the sequence is MPKNTSLKKV…GFKKALRSLD (397 aa). The ATP site is built by R127, R167, G173, G174, E206, V208, E213, G239, V240, H241, Q282, and E294. Positions 131-323 constitute an ATP-grasp 1 domain; it reads KKLMLEIGEP…IARVAAKVAI (193 aa). Residues Q282, E294, and N296 each contribute to the Mg(2+) site. Mn(2+) is bound by residues Q282, E294, and N296. Positions 398–530 are oligomerization domain; sequence TDIYRHTDLN…YSTWEQECEL (133 aa). Positions 531 to 919 are carbamoyl phosphate synthetic domain; it reads TQSDRKKILI…YKASQAADNT (389 aa). Residues 661–852 form the ATP-grasp 2 domain; sequence SVLLDQNNIP…LAKIAAKLML (192 aa). R697, R736, L738, E743, G768, V769, H770, S771, Q811, and E823 together coordinate ATP. Mg(2+) contacts are provided by Q811, E823, and N825. The Mn(2+) site is built by Q811, E823, and N825. An MGS-like domain is found at 918–1053; that stretch reads NTIPLKGNVF…TVEPLSHYHS (136 aa). The tract at residues 920–1053 is allosteric domain; the sequence is IPLKGNVFIS…TVEPLSHYHS (134 aa).

This sequence belongs to the CarB family. In terms of assembly, composed of two chains; the small (or glutamine) chain promotes the hydrolysis of glutamine to ammonia, which is used by the large (or ammonia) chain to synthesize carbamoyl phosphate. Tetramer of heterodimers (alpha,beta)4. Requires Mg(2+) as cofactor. Mn(2+) serves as cofactor.

It catalyses the reaction hydrogencarbonate + L-glutamine + 2 ATP + H2O = carbamoyl phosphate + L-glutamate + 2 ADP + phosphate + 2 H(+). The enzyme catalyses hydrogencarbonate + NH4(+) + 2 ATP = carbamoyl phosphate + 2 ADP + phosphate + 2 H(+). It functions in the pathway amino-acid biosynthesis; L-arginine biosynthesis; carbamoyl phosphate from bicarbonate: step 1/1. Its pathway is pyrimidine metabolism; UMP biosynthesis via de novo pathway; (S)-dihydroorotate from bicarbonate: step 1/3. In terms of biological role, large subunit of the glutamine-dependent carbamoyl phosphate synthetase (CPSase). CPSase catalyzes the formation of carbamoyl phosphate from the ammonia moiety of glutamine, carbonate, and phosphate donated by ATP, constituting the first step of 2 biosynthetic pathways, one leading to arginine and/or urea and the other to pyrimidine nucleotides. The large subunit (synthetase) binds the substrates ammonia (free or transferred from glutamine from the small subunit), hydrogencarbonate and ATP and carries out an ATP-coupled ligase reaction, activating hydrogencarbonate by forming carboxy phosphate which reacts with ammonia to form carbamoyl phosphate. In Methanocorpusculum labreanum (strain ATCC 43576 / DSM 4855 / Z), this protein is Carbamoyl phosphate synthase large chain.